The following is a 203-amino-acid chain: Non-specific lipid transfer protein GPI-anchored 20 (203 aa).

The first 21 residues, 1–21 (MSKIISLVVAMIAVLALPIRG), serve as a signal peptide directing secretion. 4 disulfide bridges follow: Cys29–Cys74, Cys40–Cys58, Cys59–Cys99, and Cys72–Cys108. N-linked (GlcNAc...) asparagine glycosylation is found at Asn46, Asn50, and Asn88. Residues 119–182 (GPAATFGPSM…TSRPSETPSS (64 aa)) form a disordered region. Composition is skewed to polar residues over residues 144 to 156 (AAQT…TRPF) and 169 to 179 (DGGSTSRPSET). Ser172 carries GPI-anchor amidated serine lipidation. Residues 173 to 203 (TSRPSETPSSAYALSPSLLFFSIALVALKFY) constitute a propeptide, removed in mature form.

It belongs to the plant LTP family. Expressed in seedlings, preferentially in hypocotyls and roots. Also observed in siliques and sepals.

The protein resides in the cell membrane. In terms of biological role, probable lipid transfer protein. This is Non-specific lipid transfer protein GPI-anchored 20 from Arabidopsis thaliana (Mouse-ear cress).